A 207-amino-acid polypeptide reads, in one-letter code: Small ribosomal subunit protein uS4 (207 aa).

Residues Lys-31–Gly-53 are disordered. Residues Cys-97–Val-157 enclose the S4 RNA-binding domain.

This sequence belongs to the universal ribosomal protein uS4 family. In terms of assembly, part of the 30S ribosomal subunit. Contacts protein S5. The interaction surface between S4 and S5 is involved in control of translational fidelity.

In terms of biological role, one of the primary rRNA binding proteins, it binds directly to 16S rRNA where it nucleates assembly of the body of the 30S subunit. With S5 and S12 plays an important role in translational accuracy. The chain is Small ribosomal subunit protein uS4 from Acidovorax ebreus (strain TPSY) (Diaphorobacter sp. (strain TPSY)).